A 190-amino-acid polypeptide reads, in one-letter code: Xanthine phosphoribosyltransferase 1 (190 aa).

Xanthine contacts are provided by Leu20 and Asn27. 128–132 (ANGEA) is a 5-phospho-alpha-D-ribose 1-diphosphate binding site. Lys156 is a xanthine binding site.

The protein belongs to the purine/pyrimidine phosphoribosyltransferase family. Xpt subfamily. Homodimer.

It localises to the cytoplasm. The enzyme catalyses XMP + diphosphate = xanthine + 5-phospho-alpha-D-ribose 1-diphosphate. Its pathway is purine metabolism; XMP biosynthesis via salvage pathway; XMP from xanthine: step 1/1. Functionally, converts the preformed base xanthine, a product of nucleic acid breakdown, to xanthosine 5'-monophosphate (XMP), so it can be reused for RNA or DNA synthesis. The protein is Xanthine phosphoribosyltransferase 1 of Clostridium botulinum (strain ATCC 19397 / Type A).